The chain runs to 464 residues: Siroheme synthase (464 aa).

A precorrin-2 dehydrogenase /sirohydrochlorin ferrochelatase region spans residues 1 to 203 (MDYLPLFHNL…GQETEAERLL (203 aa)). NAD(+)-binding positions include 22–23 (EI) and 43–44 (PQ). Serine 128 carries the post-translational modification Phosphoserine. Residues 216–464 (GEVYLVGAGP…AWFEGRQSAD (249 aa)) are uroporphyrinogen-III C-methyltransferase. Proline 225 serves as a coordination point for S-adenosyl-L-methionine. The Proton acceptor role is filled by aspartate 248. Catalysis depends on lysine 270, which acts as the Proton donor. Residues 301 to 303 (GGD), isoleucine 306, 331 to 332 (TA), methionine 383, and glycine 412 each bind S-adenosyl-L-methionine.

This sequence in the N-terminal section; belongs to the precorrin-2 dehydrogenase / sirohydrochlorin ferrochelatase family. In the C-terminal section; belongs to the precorrin methyltransferase family.

It carries out the reaction uroporphyrinogen III + 2 S-adenosyl-L-methionine = precorrin-2 + 2 S-adenosyl-L-homocysteine + H(+). It catalyses the reaction precorrin-2 + NAD(+) = sirohydrochlorin + NADH + 2 H(+). The catalysed reaction is siroheme + 2 H(+) = sirohydrochlorin + Fe(2+). The protein operates within cofactor biosynthesis; adenosylcobalamin biosynthesis; precorrin-2 from uroporphyrinogen III: step 1/1. It participates in cofactor biosynthesis; adenosylcobalamin biosynthesis; sirohydrochlorin from precorrin-2: step 1/1. Its pathway is porphyrin-containing compound metabolism; siroheme biosynthesis; precorrin-2 from uroporphyrinogen III: step 1/1. It functions in the pathway porphyrin-containing compound metabolism; siroheme biosynthesis; siroheme from sirohydrochlorin: step 1/1. The protein operates within porphyrin-containing compound metabolism; siroheme biosynthesis; sirohydrochlorin from precorrin-2: step 1/1. Its function is as follows. Multifunctional enzyme that catalyzes the SAM-dependent methylations of uroporphyrinogen III at position C-2 and C-7 to form precorrin-2 via precorrin-1. Then it catalyzes the NAD-dependent ring dehydrogenation of precorrin-2 to yield sirohydrochlorin. Finally, it catalyzes the ferrochelation of sirohydrochlorin to yield siroheme. The chain is Siroheme synthase from Azotobacter vinelandii (strain DJ / ATCC BAA-1303).